The following is a 115-amino-acid chain: DNA-binding protein TV0008 (115 aa).

Residues 18-37 are disordered; the sequence is LQRQAMQRQMAEEEEKQREI.

Belongs to the PDCD5 family.

In Thermoplasma volcanium (strain ATCC 51530 / DSM 4299 / JCM 9571 / NBRC 15438 / GSS1), this protein is DNA-binding protein TV0008.